The primary structure comprises 131 residues: Large ribosomal subunit protein bL17 (131 aa).

It belongs to the bacterial ribosomal protein bL17 family. In terms of assembly, part of the 50S ribosomal subunit. Contacts protein L32.

This chain is Large ribosomal subunit protein bL17, found in Azoarcus sp. (strain BH72).